We begin with the raw amino-acid sequence, 399 residues long: La protein 2 (399 aa).

Positions 3-106 (SSFNEETAKK…GRGTKLSKPE (104 aa)) constitute an HTH La-type RNA-binding domain. The region spanning 115-192 (RTLAASPFEY…ADLVLIPKSD (78 aa)) is the RRM domain. The xRRM domain maps to 269 to 399 (SLCKDNTDQL…QPTKKARKEP (131 aa)). Residues 367–399 (AELEGGKEGHKKEKGKDECFENVQPTKKARKEP) are disordered. The span at 370–385 (EGGKEGHKKEKGKDEC) shows a compositional bias: basic and acidic residues.

As to expression, expressed ubiquitously (at protein level).

Its subcellular location is the nucleus. It is found in the nucleoplasm. The protein localises to the nucleolus. In terms of biological role, binds to the 3' poly(U) terminus of nascent RNA polymerase III transcripts, protecting them from exonuclease digestion and facilitating their folding and maturation. In Arabidopsis thaliana (Mouse-ear cress), this protein is La protein 2 (LA2).